The following is a 179-amino-acid chain: uncharacterized protein (179 aa).

Over residues 1-10 the composition is skewed to polar residues; sequence ATLSAGQPAS. Disordered regions lie at residues 1–35, 59–80, and 131–179; these read ATLS…RGKC, VRRN…PIVT, and ECPT…STCR. Residues 23–33 show a composition bias toward basic residues; that stretch reads LHRHPAPKRRG. Residues 149 to 158 show a composition bias toward basic residues; it reads TPSRVRRSRR.

This is an uncharacterized protein from Human cytomegalovirus (strain AD169) (HHV-5).